The chain runs to 427 residues: Adenylosuccinate synthetase (427 aa).

GTP-binding positions include 12–18 (GDEGKGK) and 40–42 (GHT). Aspartate 13 serves as the catalytic Proton acceptor. Residues aspartate 13 and glycine 40 each contribute to the Mg(2+) site. IMP contacts are provided by residues 13-16 (DEGK), 38-41 (NAGH), threonine 128, arginine 142, glutamine 223, threonine 238, and arginine 302. The Proton donor role is filled by histidine 41. Position 298–304 (298–304 (TTTGRPR)) interacts with substrate. Residues arginine 304, 330–332 (KLD), and 412–414 (AVG) each bind GTP.

Belongs to the adenylosuccinate synthetase family. Homodimer. It depends on Mg(2+) as a cofactor.

It localises to the cytoplasm. The catalysed reaction is IMP + L-aspartate + GTP = N(6)-(1,2-dicarboxyethyl)-AMP + GDP + phosphate + 2 H(+). Its pathway is purine metabolism; AMP biosynthesis via de novo pathway; AMP from IMP: step 1/2. In terms of biological role, plays an important role in the de novo pathway of purine nucleotide biosynthesis. Catalyzes the first committed step in the biosynthesis of AMP from IMP. The protein is Adenylosuccinate synthetase of Heliobacterium modesticaldum (strain ATCC 51547 / Ice1).